Reading from the N-terminus, the 258-residue chain is Phosphate import ATP-binding protein PstB (258 aa).

Residues Ile13–Ile253 form the ABC transporter domain. ATP is bound at residue Gly45–Ser52.

The protein belongs to the ABC transporter superfamily. Phosphate importer (TC 3.A.1.7) family. As to quaternary structure, the complex is composed of two ATP-binding proteins (PstB), two transmembrane proteins (PstC and PstA) and a solute-binding protein (PstS).

It is found in the cell membrane. The catalysed reaction is phosphate(out) + ATP + H2O = ADP + 2 phosphate(in) + H(+). In terms of biological role, part of the ABC transporter complex PstSACB involved in phosphate import. Responsible for energy coupling to the transport system. This chain is Phosphate import ATP-binding protein PstB, found in Methanosarcina mazei (strain ATCC BAA-159 / DSM 3647 / Goe1 / Go1 / JCM 11833 / OCM 88) (Methanosarcina frisia).